The chain runs to 75 residues: Protein SlyX homolog (75 aa).

A disordered region spans residues 56-75; the sequence is KNMDSSNMEDPANEPPPPHY.

This sequence belongs to the SlyX family.

The polypeptide is Protein SlyX homolog (Vibrio parahaemolyticus serotype O3:K6 (strain RIMD 2210633)).